Consider the following 89-residue polypeptide: Large ribosomal subunit protein bL31B (89 aa).

Belongs to the bacterial ribosomal protein bL31 family. Type B subfamily. Part of the 50S ribosomal subunit.

The sequence is that of Large ribosomal subunit protein bL31B from Corynebacterium aurimucosum (strain ATCC 700975 / DSM 44827 / CIP 107346 / CN-1) (Corynebacterium nigricans).